Reading from the N-terminus, the 451-residue chain is Mannan endo-1,6-alpha-mannosidase DCW1 (451 aa).

Positions 1 to 21 (MLAVTFTAAAVLSLLAASGRT) are cleaved as a signal peptide. N-linked (GlcNAc...) asparagine glycosylation is found at Asn84, Asn109, Asn203, Asn242, Asn267, and Asn291. Positions 397 to 419 (AMNGGTSPGDPAAGTKTKAENLP) are disordered. A lipid anchor (GPI-anchor amidated aspartate) is attached at Asp427. The propeptide at 428–451 (RAGAGIITALIGSSFLACTLWLII) is removed in mature form.

Belongs to the glycosyl hydrolase 76 family.

The protein localises to the secreted. It is found in the cell wall. Its subcellular location is the cell membrane. The catalysed reaction is Random hydrolysis of (1-&gt;6)-alpha-D-mannosidic linkages in unbranched (1-&gt;6)-mannans.. Its function is as follows. Required for normal synthesis of the cell wall. This is Mannan endo-1,6-alpha-mannosidase DCW1 (DCW1) from Eremothecium gossypii (strain ATCC 10895 / CBS 109.51 / FGSC 9923 / NRRL Y-1056) (Yeast).